The following is a 141-amino-acid chain: Nucleoside diphosphate kinase (141 aa).

Residues Lys11, Phe59, Arg87, Thr93, Arg104, and Asn114 each coordinate ATP. His117 acts as the Pros-phosphohistidine intermediate in catalysis.

Belongs to the NDK family. In terms of assembly, homotetramer. It depends on Mg(2+) as a cofactor.

It is found in the cytoplasm. The enzyme catalyses a 2'-deoxyribonucleoside 5'-diphosphate + ATP = a 2'-deoxyribonucleoside 5'-triphosphate + ADP. The catalysed reaction is a ribonucleoside 5'-diphosphate + ATP = a ribonucleoside 5'-triphosphate + ADP. Its function is as follows. Major role in the synthesis of nucleoside triphosphates other than ATP. The ATP gamma phosphate is transferred to the NDP beta phosphate via a ping-pong mechanism, using a phosphorylated active-site intermediate. This Variovorax paradoxus (strain S110) protein is Nucleoside diphosphate kinase.